The primary structure comprises 147 residues: uncharacterized protein (147 aa).

The segment at 51–72 is disordered; that stretch reads VTSSMSVMNDSEECPLINGPSM.

This is an uncharacterized protein from Gallid herpesvirus 2 (strain GA) (GaHV-2).